The following is a 710-amino-acid chain: ATP-dependent RNA helicase DBP7 (710 aa).

The interval 1 to 97 is disordered; the sequence is MSDNDGLMLM…KDVPPQPANA (97 aa). Over residues 11–21 the composition is skewed to polar residues; sequence NFTTESGPDNA. The segment covering 54 to 68 has biased composition (low complexity); the sequence is PAAAVEEAPAAAVPE. The Q motif signature appears at 134–163; that stretch reads DTFEALGVRGTLLEHLTGKMKIQKPTKIQK. Positions 167–361 constitute a Helicase ATP-binding domain; that stretch reads PEVLNGKADL…DIALTDPKVI (195 aa). An ATP-binding site is contributed by 180-187; sequence AQTGSGKT. Residues 296-299 carry the DEAD box motif; that stretch reads DEGD. One can recognise a Helicase C-terminal domain in the interval 396–588; the sequence is AISELSRKAP…LLAPAFAAPV (193 aa). The segment at 669 to 690 is disordered; sequence PKGMAAHRGKPATPKPKQDDAR.

Belongs to the DEAD box helicase family. DDX31/DBP7 subfamily.

Its subcellular location is the nucleus. The protein resides in the nucleolus. It catalyses the reaction ATP + H2O = ADP + phosphate + H(+). Its function is as follows. ATP-binding RNA helicase involved in the biogenesis of 60S ribosomal subunits and is required for the normal formation of 25S and 5.8S rRNAs. The sequence is that of ATP-dependent RNA helicase DBP7 (DBP7) from Eremothecium gossypii (strain ATCC 10895 / CBS 109.51 / FGSC 9923 / NRRL Y-1056) (Yeast).